Consider the following 365-residue polypeptide: Tetratricopeptide repeat protein 19, mitochondrial (365 aa).

Residues 1 to 52 (MFRLLRWRLGRTLLRAAGRRCGGCTARLLPERAGDAGPGAERLRTRGAPARG) constitute a mitochondrion transit peptide. TPR repeat units lie at residues 127 to 160 (TYTY…LLGG), 170 to 203 (VEIS…LEGK), 220 to 260 (ANTY…CQEI), 269 to 302 (IVLM…AREI), and 308 to 341 (HMVL…AELK).

It belongs to the TTC19 family. As to quaternary structure, binds to the mature mitochondrial complex III dimer, after the incorporation of the Rieske protein UQCRFS1. Interacts with UQCRC1 and UQCRFS1. Interacts with ZFYVE26 and CHMP4B. In terms of processing, proteolytically cleaved by PARL.

Its subcellular location is the mitochondrion inner membrane. Required for the preservation of the structural and functional integrity of mitochondrial respiratory complex III by allowing the physiological turnover of the Rieske protein UQCRFS1. Involved in the clearance of UQCRFS1 N-terminal fragments, which are produced upon incorporation into the complex III and whose presence is detrimental for its catalytic activity. This chain is Tetratricopeptide repeat protein 19, mitochondrial (Ttc19), found in Rattus norvegicus (Rat).